A 423-amino-acid chain; its full sequence is Glucose-1-phosphate adenylyltransferase (423 aa).

Residues Tyr-108, Gly-173, Glu-188–Lys-189, and Ser-207 each bind alpha-D-glucose 1-phosphate.

It belongs to the bacterial/plant glucose-1-phosphate adenylyltransferase family. In terms of assembly, homotetramer.

The catalysed reaction is alpha-D-glucose 1-phosphate + ATP + H(+) = ADP-alpha-D-glucose + diphosphate. It functions in the pathway glycan biosynthesis; glycogen biosynthesis. Functionally, involved in the biosynthesis of ADP-glucose, a building block required for the elongation reactions to produce glycogen. Catalyzes the reaction between ATP and alpha-D-glucose 1-phosphate (G1P) to produce pyrophosphate and ADP-Glc. The chain is Glucose-1-phosphate adenylyltransferase from Francisella tularensis subsp. tularensis (strain WY96-3418).